Reading from the N-terminus, the 63-residue chain is MRCLPVFIVLLLLIVSAPGFDARPKTEDDVPLSSFHDDLQRTVRTLLDIRMCCLGTSGCCPWG.

Positions 1-19 (MRCLPVFIVLLLLIVSAPG) are cleaved as a signal peptide. Positions 20 to 49 (FDARPKTEDDVPLSSFHDDLQRTVRTLLDI) are excised as a propeptide. A Tryptophan amide modification is found at W62.

It belongs to the conotoxin T superfamily. In terms of processing, contains 2 disulfide bonds that can be either 'C1-C3, C2-C4' or 'C1-C4, C2-C3', since these disulfide connectivities have been observed for conotoxins with cysteine framework V (for examples, see AC P0DQQ7 and AC P81755). Expressed by the venom duct.

It localises to the secreted. This chain is Conotoxin PnMRCL-0111, found in Conus pennaceus (Feathered cone).